Here is an 850-residue protein sequence, read N- to C-terminus: MYSKKYTSFVIVLILSCIISTCTSNQISEDVGKAINQKLNENIEKVEDVVVQFENVANQVIEELKVEHQRQELLGEVKHDSLRDSATNYIWGLLDKIQSYLPKDNNKVSKVEEAFSSGQNNNIGSSIGDSTGASTSPQFQSINGLSGASQSSGSSTGGTGDSDSKTTNEAIIFSSKVSTTDRQESIIGQVAITAKDSLGATITGLGGVSSTAKVGGQITNGRAQGQVITGGDNTGTVGRGAVTTASSVANTVGEFLGGSRTGGSSSAGTVGNVISDSYTSIGKIASGNGNSLSETIGTTGDTLAHTFAGTDSVGVTGFHIITKTFNLIAGGKFNSDQQYIDKSYGSIPSQDNEEIKKRLQSAHQQLQEQSPAIYQSMKSEDLKNLDDEVIRNTLKEMQIQRENQDIGQQNQEDKEQLIDLQNREPGLYKNQQDLKQEKRANQQELINYELNLQEDQEQYELLLDQLYDEQQQQPQKVSNKQQLQEQQINSPEDIQYQLNHLNQPFQDDYHNDQTEELKDDDYNFNDQQINNGQFENNVEEFPDLNDANDNFEQVNNNNNNINNNNNNNFKVDKSKKSAQQVEIALENERLYLQEVEDAPERLYEEIHNSNLNKAVQEAEEIERQQNGNGSPAVNSHKIVTQMGNVENNEITNEQDAIEQAQHLQRIENGEDIDEYEAAQHEVAFLDENEQDAAKLQNEMDQLELLLEENEEEQFSNKNLQQLNENENQQQQQGQQQVQATNVEQQIVEQLKVIKEFQRQDQQKKQKIQQENDAVYLSDVEKAQLELDAELAKNNKQENQDENLVQEKQQSPDQIKNQLKNIQHEQQIQEQQDKLNQEKNQQLLEQEQNQK.

Residues 1 to 24 form the signal peptide; sequence MYSKKYTSFVIVLILSCIISTCTS. Over residues 119–130 the composition is skewed to low complexity; sequence QNNNIGSSIGDS. Disordered stretches follow at residues 119–167 and 787–850; these read QNNN…SKTT and DAEL…QNQK. Over residues 131-143 the composition is skewed to polar residues; the sequence is TGASTSPQFQSIN. The span at 144 to 154 shows a compositional bias: low complexity; it reads GLSGASQSSGS. The span at 787 to 798 shows a compositional bias: basic and acidic residues; sequence DAELAKNNKQEN. Residues 801–820 show a composition bias toward polar residues; that stretch reads ENLVQEKQQSPDQIKNQLKN. The span at 837–850 shows a compositional bias: low complexity; that stretch reads EKNQQLLEQEQNQK.

This is cAMP-inducible prespore protein D7 (D7) from Dictyostelium discoideum (Social amoeba).